Here is a 59-residue protein sequence, read N- to C-terminus: UPF0391 membrane protein AZC_4184 (59 aa).

2 consecutive transmembrane segments (helical) span residues 4 to 24 and 30 to 50; these read WALT…TAVA and IAKI…VMGF.

This sequence belongs to the UPF0391 family.

Its subcellular location is the cell membrane. In Azorhizobium caulinodans (strain ATCC 43989 / DSM 5975 / JCM 20966 / LMG 6465 / NBRC 14845 / NCIMB 13405 / ORS 571), this protein is UPF0391 membrane protein AZC_4184.